A 330-amino-acid polypeptide reads, in one-letter code: Glycerol-3-phosphate dehydrogenase [NAD(P)+] (330 aa).

Ser-10, Trp-11, Arg-31, and Lys-104 together coordinate NADPH. Lys-104, Gly-131, and Ser-133 together coordinate sn-glycerol 3-phosphate. Ala-135 contributes to the NADPH binding site. Positions 186, 239, 249, 250, and 251 each coordinate sn-glycerol 3-phosphate. The active-site Proton acceptor is Lys-186. Arg-250 contacts NADPH. NADPH contacts are provided by Val-274 and Glu-276.

This sequence belongs to the NAD-dependent glycerol-3-phosphate dehydrogenase family.

The protein localises to the cytoplasm. It carries out the reaction sn-glycerol 3-phosphate + NAD(+) = dihydroxyacetone phosphate + NADH + H(+). The enzyme catalyses sn-glycerol 3-phosphate + NADP(+) = dihydroxyacetone phosphate + NADPH + H(+). The protein operates within membrane lipid metabolism; glycerophospholipid metabolism. Catalyzes the reduction of the glycolytic intermediate dihydroxyacetone phosphate (DHAP) to sn-glycerol 3-phosphate (G3P), the key precursor for phospholipid synthesis. This is Glycerol-3-phosphate dehydrogenase [NAD(P)+] from Thermoanaerobacter sp. (strain X514).